The primary structure comprises 67 residues: Andropin (67 aa).

A signal peptide spans 1–19 (MKYFLVLVVLTLILAISVG).

The protein belongs to the andropin family. Ejaculatory duct of adult males.

The protein resides in the secreted. In terms of biological role, male-specific peptide with moderate activity against Gram-positive bacteria. The polypeptide is Andropin (Anp) (Drosophila orena (Fruit fly)).